We begin with the raw amino-acid sequence, 260 residues long: Acetylglutamate kinase (260 aa).

Residues 46-47 (GG), Arg68, and Asn160 contribute to the substrate site.

This sequence belongs to the acetylglutamate kinase family. ArgB subfamily.

It localises to the cytoplasm. It carries out the reaction N-acetyl-L-glutamate + ATP = N-acetyl-L-glutamyl 5-phosphate + ADP. It functions in the pathway amino-acid biosynthesis; L-arginine biosynthesis; N(2)-acetyl-L-ornithine from L-glutamate: step 2/4. Functionally, catalyzes the ATP-dependent phosphorylation of N-acetyl-L-glutamate. This Shewanella denitrificans (strain OS217 / ATCC BAA-1090 / DSM 15013) protein is Acetylglutamate kinase.